The primary structure comprises 120 residues: Large ribosomal subunit protein uL18 (120 aa).

It belongs to the universal ribosomal protein uL18 family. Part of the 50S ribosomal subunit; part of the 5S rRNA/L5/L18/L25 subcomplex. Contacts the 5S and 23S rRNAs.

Functionally, this is one of the proteins that bind and probably mediate the attachment of the 5S RNA into the large ribosomal subunit, where it forms part of the central protuberance. In Brucella abortus (strain S19), this protein is Large ribosomal subunit protein uL18.